The primary structure comprises 329 residues: uncharacterized protein (329 aa).

10 consecutive transmembrane segments (helical) span residues 9–29 (LMGLLIVLLAAIFFCFHNVIV), 53–73 (SHSFLLLLLRMLWVVPLMALI), 105–125 (FLMFLYLVLLYISISFIPTGI), 126–146 (AITLFFTYPIFTALLAWRLFN), 154–174 (WLVIGLTLIGTFLTIPYAYGG), 179–199 (LVLGVSTGIASGIVYAGYTVF), 210–230 (VPFTWISFATTLILSILCLII), 240–260 (WLAITIGSLLSALFTLAGHVL), 273–293 (AAIIGATNPALTVVLAGLAIQ), and 296–316 (LTNIQIFGVCLVTFSIALLNY). EamA domains follow at residues 103-169 (CGFL…LTIP) and 191-316 (IVYA…LLNY).

The protein belongs to the EamA transporter family.

Its subcellular location is the cell membrane. This is an uncharacterized protein from Synechocystis sp. (strain ATCC 27184 / PCC 6803 / Kazusa).